The chain runs to 571 residues: Leucine aminopeptidase A2, chloroplastic (571 aa).

The N-terminal 42 residues, 1–42 (MATLRVSSLFASSSSSLHSNPSVFTKYQSSPKWAFSFPVTPL), are a transit peptide targeting the chloroplast. Residues Lys342 and Asp347 each coordinate Mg(2+). Residue Lys354 is part of the active site. Mg(2+) is bound by residues Asp367, Asp427, and Glu429. Residue Arg431 is part of the active site.

Belongs to the peptidase M17 family. As to quaternary structure, homohexamer (dimer of homotrimers). Mg(2+) is required as a cofactor. As to expression, expressed during floral development. Expressed in healthy and senescent leaves, cotyledons (emergence from seed coats), pistils, sepals, petals, stamens, and floral buds (at protein level).

Its subcellular location is the plastid. It is found in the chloroplast. The enzyme catalyses Release of an N-terminal amino acid, Xaa-|-Yaa-, in which Xaa is preferably Leu, but may be other amino acids including Pro although not Arg or Lys, and Yaa may be Pro. Amino acid amides and methyl esters are also readily hydrolyzed, but rates on arylamides are exceedingly low.. It carries out the reaction Release of N-terminal proline from a peptide.. Catalyzes the removal of unsubstituted N-terminal amino acids from various peptides. When associated as homohexamer, catalyzes the proteolyzes of Xaa-Leu dipeptides. Possesses leucine aminopeptidase activity against the model substrate leucine-amido methyl coumarin. Presumably involved in the processing and regular turnover of intracellular proteins. Regulates wound signaling and has a role in insect defense. Functionally, functions as a molecular chaperone to protect proteins from heat-induced damage. The sequence is that of Leucine aminopeptidase A2, chloroplastic from Solanum lycopersicum (Tomato).